The sequence spans 274 residues: MSASGEISTPRDYIGHHLNHLQLDLRTFELVNPHSTGPATFWTLNIDSLFFSVVLGLAFLLVFRKVAASATSGVPGKLQTAVELIIGFVDNSVRDMYHGKSKVIAPLALTVFVWVLLMNMMDLLPIDLLPYIGEHVFGLPALRVVPTADVSITLSMALGVFILIIFYSIKMKGVGGFTKELTMQPFNHPIFIPVNLILEGVSLLSKPLSLGLRLFGNMYAGELIFILIAGLLPWWSQWMLSVPWAIFHILIITLQAFIFMVLTIVYLSMASEEH.

5 consecutive transmembrane segments (helical) span residues 43–63 (TLNI…LLVF), 103–123 (VIAP…MMDL), 149–169 (DVSI…FYSI), 223–243 (LIFI…LSVP), and 245–265 (AIFH…LTIV).

It belongs to the ATPase A chain family. In terms of assembly, F-type ATPases have 2 components, CF(1) - the catalytic core - and CF(0) - the membrane proton channel. CF(1) has five subunits: alpha(3), beta(3), gamma(1), delta(1), epsilon(1). CF(0) has three main subunits: a(1), b(2) and c(9-12). The alpha and beta chains form an alternating ring which encloses part of the gamma chain. CF(1) is attached to CF(0) by a central stalk formed by the gamma and epsilon chains, while a peripheral stalk is formed by the delta and b chains.

The protein localises to the cell inner membrane. In terms of biological role, key component of the proton channel; it plays a direct role in the translocation of protons across the membrane. This is ATP synthase subunit a from Yersinia pestis bv. Antiqua (strain Antiqua).